The primary structure comprises 1007 residues: Probable beta-galactosidase A (1007 aa).

Residues 1–18 (MRLLPVWTAALLAAQAAG) form the signal peptide. Tyrosine 96, asparagine 140, alanine 141, and glutamate 142 together coordinate substrate. A glycan (N-linked (GlcNAc...) asparagine) is linked at asparagine 156. Asparagine 199 is a binding site for substrate. Glutamate 200 functions as the Proton donor in the catalytic mechanism. The cysteines at positions 205 and 206 are disulfide-linked. Position 260 (tyrosine 260) interacts with substrate. A disulfide bridge links cysteine 266 with cysteine 315. Glutamate 298 serves as the catalytic Nucleophile. Residue tyrosine 364 participates in substrate binding. 6 N-linked (GlcNAc...) asparagine glycosylation sites follow: asparagine 405, asparagine 422, asparagine 621, asparagine 740, asparagine 775, and asparagine 914.

It belongs to the glycosyl hydrolase 35 family.

It is found in the secreted. The enzyme catalyses Hydrolysis of terminal non-reducing beta-D-galactose residues in beta-D-galactosides.. Its function is as follows. Cleaves beta-linked terminal galactosyl residues from gangliosides, glycoproteins, and glycosaminoglycans. This chain is Probable beta-galactosidase A (lacA), found in Emericella nidulans (strain FGSC A4 / ATCC 38163 / CBS 112.46 / NRRL 194 / M139) (Aspergillus nidulans).